The sequence spans 104 residues: Large ribosomal subunit protein uL24 (104 aa).

It belongs to the universal ribosomal protein uL24 family. As to quaternary structure, part of the 50S ribosomal subunit.

One of two assembly initiator proteins, it binds directly to the 5'-end of the 23S rRNA, where it nucleates assembly of the 50S subunit. In terms of biological role, one of the proteins that surrounds the polypeptide exit tunnel on the outside of the subunit. This chain is Large ribosomal subunit protein uL24, found in Corynebacterium diphtheriae (strain ATCC 700971 / NCTC 13129 / Biotype gravis).